Consider the following 213-residue polypeptide: Large ribosomal subunit protein uL1 (213 aa).

Belongs to the universal ribosomal protein uL1 family. In terms of assembly, part of the 50S ribosomal subunit.

Binds directly to 23S rRNA. Probably involved in E site tRNA release. Functionally, protein L1 is also a translational repressor protein, it controls the translation of its operon by binding to its mRNA. The sequence is that of Large ribosomal subunit protein uL1 from Methanosarcina barkeri (strain Fusaro / DSM 804).